The sequence spans 1141 residues: DNA polymerase II large subunit (1141 aa).

Residues 567-587 are disordered; that stretch reads AGTRVGGRMGRPGKSAPRKMK.

Belongs to the archaeal DNA polymerase II family. Heterodimer of a large subunit and a small subunit.

The enzyme catalyses DNA(n) + a 2'-deoxyribonucleoside 5'-triphosphate = DNA(n+1) + diphosphate. It carries out the reaction Exonucleolytic cleavage in the 3'- to 5'-direction to yield nucleoside 5'-phosphates.. In terms of biological role, possesses two activities: a DNA synthesis (polymerase) and an exonucleolytic activity that degrades single-stranded DNA in the 3'- to 5'-direction. Has a template-primer preference which is characteristic of a replicative DNA polymerase. In Methanocorpusculum labreanum (strain ATCC 43576 / DSM 4855 / Z), this protein is DNA polymerase II large subunit.